A 484-amino-acid polypeptide reads, in one-letter code: Ectonucleoside triphosphate diphosphohydrolase 6 (484 aa).

The Cytoplasmic portion of the chain corresponds to 1 to 39; it reads MKKGIRYETSRKTSYIFQQPQHGPWQTRMRKISNHGSLR. A helical; Signal-anchor for type II membrane protein transmembrane segment spans residues 40 to 60; the sequence is VAKVAYPLGLCVGVFIYVAYI. Residues 61-484 lie on the Lumenal side of the membrane; the sequence is KWHRATATQA…SLNRQKSPAS (424 aa). An N-linked (GlcNAc...) asparagine glycan is attached at asparagine 220. Catalysis depends on glutamate 224, which acts as the Proton acceptor. N-linked (GlcNAc...) asparagine glycosylation is present at asparagine 284. 2 cysteine pairs are disulfide-bonded: cysteine 325–cysteine 356 and cysteine 416–cysteine 430.

It belongs to the GDA1/CD39 NTPase family. Monomer. The cofactor is Ca(2+). Requires Mg(2+) as cofactor. In terms of processing, the secreted form may be produced by intracellular processing. N-glycosylated. In terms of tissue distribution, expressed in most tissues, but predominantly in heart.

It is found in the golgi apparatus membrane. It localises to the secreted. Its subcellular location is the cell membrane. It carries out the reaction a ribonucleoside 5'-diphosphate + H2O = a ribonucleoside 5'-phosphate + phosphate + H(+). The catalysed reaction is IDP + H2O = IMP + phosphate + H(+). The enzyme catalyses GDP + H2O = GMP + phosphate + H(+). It catalyses the reaction UDP + H2O = UMP + phosphate + H(+). With respect to regulation, glycosylation does not appear to be required for enzymatic activity. Its function is as follows. Catalyzes the hydrolysis of nucleoside triphosphates and diphosphates in a calcium- or magnesium-dependent manner. Has a strong preference for nucleoside diphosphates, preferentially hydrolyzes GDP, IDP, and UDP, with slower hydrolysis of CDP, ITP, GTP, CTP, ADP, and UTP and virtually no hydrolysis of ATP. The membrane bound form might support glycosylation reactions in the Golgi apparatus and, when released from cells, might catalyze the hydrolysis of extracellular nucleotides. This Homo sapiens (Human) protein is Ectonucleoside triphosphate diphosphohydrolase 6 (ENTPD6).